The primary structure comprises 247 residues: Putative methyltransferase YqeM (247 aa).

The protein belongs to the methyltransferase superfamily.

In terms of biological role, may be a S-adenosyl-L-methionine (SAM)-dependent methyltransferase. The polypeptide is Putative methyltransferase YqeM (yqeM) (Bacillus subtilis (strain 168)).